We begin with the raw amino-acid sequence, 538 residues long: Lipid scramblase CLPTM1L (538 aa).

Over 1–10 (MWSGRSSFTS) the chain is Cytoplasmic. Residues 11–31 (LVVGVFVVYVVHTCWVMYGIV) form a helical membrane-spanning segment. Over 32–284 (YTRPCSGDAN…VKGIFVDTNL (253 aa)) the chain is Extracellular. N-linked (GlcNAc...) asparagine glycans are attached at residues N91 and N101. Residues 285–305 (YFLALTFFVAAFHLLFDFLAF) form a helical membrane-spanning segment. The Cytoplasmic portion of the chain corresponds to 306 to 324 (KNDISFWKKKKSMIGMSTK). The helical transmembrane segment at 325–342 (AVLWRCFSTVVIFLFLLD) threads the bilayer. At 343–346 (EQTS) the chain is on the extracellular side. Residues 347–364 (LLVLVPAGVGAAIELWKV) form a helical membrane-spanning segment. Residues 365–402 (KKALKMTILWRGLMPEFELGTYSESERKTEEYDTQAMK) are Cytoplasmic-facing. Residues 403-423 (YLSYLLYPLCVGGAVYSLLNI) traverse the membrane as a helical segment. Residues 424-428 (KYKSW) are Extracellular-facing. A helical membrane pass occupies residues 429–449 (YSWLINSFVNGVYAFGFLFML). The Cytoplasmic portion of the chain corresponds to 450-538 (PQLFVNYKLK…EKAARAPHTD (89 aa)).

This sequence belongs to the CLPTM1 family.

It is found in the endoplasmic reticulum membrane. It carries out the reaction a 6-(alpha-D-glucosaminyl)-1-(1,2-diacyl-sn-glycero-3-phospho)-1D-myo-inositol(in) = a 6-(alpha-D-glucosaminyl)-1-(1,2-diacyl-sn-glycero-3-phospho)-1D-myo-inositol(out). The enzyme catalyses 6-(alpha-D-glucosaminyl)-(1-octadecanoyl,2-(9Z)-octadecenoyl-sn-glycero-3-phospho)-1D-myo-inositol(in) = 6-(alpha-D-glucosaminyl)-(1-octadecanoyl,2-(9Z)-octadecenoyl-sn-glycero-3-phospho)-1D-myo-inositol(out). It catalyses the reaction a 1,2-diacyl-sn-glycero-3-phospho-(1D-myo-inositol)(in) = a 1,2-diacyl-sn-glycero-3-phospho-(1D-myo-inositol)(out). The catalysed reaction is a 1,2-diacyl-sn-glycero-3-phosphocholine(in) = a 1,2-diacyl-sn-glycero-3-phosphocholine(out). It carries out the reaction a 1,2-diacyl-sn-glycero-3-phosphoethanolamine(in) = a 1,2-diacyl-sn-glycero-3-phosphoethanolamine(out). Functionally, scramblase that mediates the translocation of glucosaminylphosphatidylinositol (alpha-D-GlcN-(1-6)-(1,2-diacyl-sn-glycero-3-phospho)-1D-myo-inositol, GlcN-PI) across the endoplasmic reticulum (ER) membrane, from the cytosolic leaflet to the luminal leaflet of the ER membrane, where it participates in the biosynthesis of glycosylphosphatidylinositol (GPI). GPI is a lipid glycoconjugate involved in post-translational modification of proteins. Can also translocate 1,2-diacyl-sn-glycero-3-phospho-(1D-myo-inositol) (phosphatidylinositol or PI), as well as several other phospholipids (1,2-diacyl-sn-glycero-3-phosphocholine, 1,2-diacyl-sn-glycero-3-phosphoethanolamine), and N-acetylglucosaminylphosphatidylinositol (GlcNAc-PI) in vitro. This chain is Lipid scramblase CLPTM1L (CLPTM1L), found in Pongo abelii (Sumatran orangutan).